Here is a 1021-residue protein sequence, read N- to C-terminus: MAGKARVHELAKELGVDSKTVLAKLKDLGEFVKSASSTVEAPVVRKLKEAFPAEGGSASGGRPGGRPGPGNGARPAPPRPGLAPRPGPRPVPGRPGPAARPGGPAAPSAPAAPSAPAPGAPAASPPASQPRPIAASAAAPPPAATSIPPVSSPAAASGPRPGPRPAGGPAAPGRARPGAPVPPPGGSAPSAPSAGGPRPGPRPGPRPSAPGNNPYTTPSAGPRQSAGQSGSGPASPPRPGAPRPGPRPGGPRPGAPGAGGPRPSPGSMPPRPGSRPGGSGGMPPRPGGSGGPRPNANMFQPRPAGGAPGRPGGGGAPGRPGGGGGGGGARPGGFAGRGGAPGRPGGGGGGGGGAGAPGRPGGGGGGRPAAGGRGRGGTTAGAFGPGGRGRPGRQRKSKRAKRQEWESGLEAPRMGAMVPRGNGQAIRLPRGASLADFADKIDANPGALVQVVFTQLGEMVTATQSCTDETLQLLGVTLGYEVQIVSPEDEDKELLESFDLSFGGEYGDDVELSIRPPVVTVMGHVDHGKTKLLDAIRFTDVVAGEAGGITQHIGAYQVRATVDGDERPITFIDTPGHETFTAMRARGAQVTDIVVLVVAADDGVKPQTIEALNHAQAAGVPVVVAVNKVDKEGADPAKVRGQLTEYGLVAEEYGGDTMFVDVSARNKTNIDGLLEAIILTADASLDLRAPTGTEAQGVAIEGRLDRGRGPVATVLVQRGTLRVGDSVVAGEAFGRVRAMLDEHGGQVTEAGPARPVQVLGFTSVPDAGDNFLVVPEDRVARQIAERRQARERNAELALSRGRPTLETILERMKEGEKTQLNLILKGDVSGSVEALEDALLKIDVGDEVGLRIIDRGVGAITETNVMLASASDAVIIGFNVRPQGKATELADREGVEVRYYSVIYQAIEDIENALKGMLKPVYEEAQLGTAEVREVFRVPRIGNVAGSLVRSGIIRRNTKARLIRDGVVVADNLTVESLKRFKDDATEVREGYECGIGLGSFNDIKIDDVIETFEQREVPRV.

Residues 50 to 422 form a disordered region; it reads AFPAEGGSAS…RMGAMVPRGN (373 aa). The span at 57–71 shows a compositional bias: gly residues; sequence SASGGRPGGRPGPGN. Residues 75–95 are compositionally biased toward pro residues; it reads PAPPRPGLAPRPGPRPVPGRP. Positions 96 to 112 are enriched in low complexity; sequence GPAARPGGPAAPSAPAA. A compositionally biased stretch (pro residues) spans 113–129; it reads PSAPAPGAPAASPPASQ. Composition is skewed to low complexity over residues 130 to 159, 167 to 178, and 187 to 196; these read PRPI…ASGP, GGPAAPGRARPG, and SAPSAPSAGG. A compositionally biased stretch (pro residues) spans 198 to 208; sequence RPGPRPGPRPS. A compositionally biased stretch (low complexity) spans 219-233; sequence SAGPRQSAGQSGSGP. Composition is skewed to pro residues over residues 234-254 and 262-273; these read ASPP…PRPG and RPSPGSMPPRPG. 2 stretches are compositionally biased toward gly residues: residues 275–291 and 306–389; these read RPGG…GSGG and GAPG…GGRG. A compositionally biased stretch (basic residues) spans 390 to 401; sequence RPGRQRKSKRAK. In terms of domain architecture, tr-type G spans 514-686; the sequence is IRPPVVTVMG…IILTADASLD (173 aa). Residues 523–530 are G1; sequence GHVDHGKT. 523–530 lines the GTP pocket; it reads GHVDHGKT. Positions 548 to 552 are G2; sequence GITQH. A G3 region spans residues 573–576; that stretch reads DTPG. GTP is bound by residues 573 to 577 and 627 to 630; these read DTPGH and NKVD. A G4 region spans residues 627 to 630; it reads NKVD. Positions 663 to 665 are G5; that stretch reads SAR.

Belongs to the TRAFAC class translation factor GTPase superfamily. Classic translation factor GTPase family. IF-2 subfamily.

Its subcellular location is the cytoplasm. In terms of biological role, one of the essential components for the initiation of protein synthesis. Protects formylmethionyl-tRNA from spontaneous hydrolysis and promotes its binding to the 30S ribosomal subunits. Also involved in the hydrolysis of GTP during the formation of the 70S ribosomal complex. This is Translation initiation factor IF-2 from Frankia alni (strain DSM 45986 / CECT 9034 / ACN14a).